The following is a 208-amino-acid chain: MKGLFVTIEGPEGSGKTTLIKSLLPYFEQKAQKVMATREPGGIAISEDIRTILHKQEYTMMEARTEALLYAAARRQHLVEKVMPALNEKYLVLCDRFIDSSLAYQGYARGLGMDKVFEINRFATEDCMPSLTIYLDIEPEVGLARIEKDAGREVNRLDMEDISFHKRVREGYLQVVERFSDRIVLVNADQPMEKLIEEVVQIIEDKLL.

10-17 (GPEGSGKT) contacts ATP.

The protein belongs to the thymidylate kinase family.

It catalyses the reaction dTMP + ATP = dTDP + ADP. In terms of biological role, phosphorylation of dTMP to form dTDP in both de novo and salvage pathways of dTTP synthesis. This Bacillus cereus (strain B4264) protein is Thymidylate kinase.